The sequence spans 279 residues: Large ribosomal subunit protein uL2 (279 aa).

Disordered regions lie at residues 1–28 (MPAR…TKEK) and 221–279 (RGTV…GRRR). Residues 12-22 (GRRNSSVLTRD) are compositionally biased toward polar residues.

This sequence belongs to the universal ribosomal protein uL2 family. In terms of assembly, part of the 50S ribosomal subunit. Forms a bridge to the 30S subunit in the 70S ribosome.

Its function is as follows. One of the primary rRNA binding proteins. Required for association of the 30S and 50S subunits to form the 70S ribosome, for tRNA binding and peptide bond formation. It has been suggested to have peptidyltransferase activity; this is somewhat controversial. Makes several contacts with the 16S rRNA in the 70S ribosome. The polypeptide is Large ribosomal subunit protein uL2 (Rubrobacter xylanophilus (strain DSM 9941 / JCM 11954 / NBRC 16129 / PRD-1)).